Consider the following 381-residue polypeptide: Opsin Rh2 (381 aa).

The Extracellular segment spans residues 1–56; the sequence is MERSLLPEPPLAMALLGPRFEAQTGGNRSVLDNVLPDMAPLVNPYWSRFAPMDPTM. The N-linked (GlcNAc...) asparagine glycan is linked to Asn27. A helical transmembrane segment spans residues 57–81; that stretch reads SKILGLFTLVILIISCCGNGVVVYI. Residues 82-93 lie on the Cytoplasmic side of the membrane; sequence FGGTKSLRTPAN. A helical transmembrane segment spans residues 94–119; sequence LLVLNLAFSDFCMMASQSPVMIINFY. The Extracellular portion of the chain corresponds to 120-133; it reads YETWVLGPLWCDIY. Cys130 and Cys207 are oxidised to a cystine. A helical transmembrane segment spans residues 134-153; it reads AACGSLFGCVSIWSMCMIAF. Residues 154-172 lie on the Cytoplasmic side of the membrane; sequence DRYNVIVKGINGTPMTIKT. A helical membrane pass occupies residues 173-196; the sequence is SIMKIAFIWMMAVFWTIMPLIGWS. Topologically, residues 197-220 are extracellular; the sequence is SYVPEGNLTACSIDYMTRQWNPRS. A helical transmembrane segment spans residues 221–248; the sequence is YLITYSLFVYYTPLFMICYSYWFIIATV. Topologically, residues 249-283 are cytoplasmic; that stretch reads AAHEKAMRDQAKKMNVKSLRSSEDCDKSAENKLAK. Residues 284–307 traverse the membrane as a helical segment; that stretch reads VALTTISLWFMAWTPYLIICYFGL. Residues 308 to 314 lie on the Extracellular side of the membrane; sequence FKIDGLT. A helical transmembrane segment spans residues 315-339; it reads PLTTIWGATFAKTSAVYNPIVYGIS. Position 326 is an N6-(retinylidene)lysine (Lys326). Residues 340-381 lie on the Cytoplasmic side of the membrane; it reads HPKYRLVLKEKCPMCVCGSTDEPKPDAPPSDTETTSEAESKA. Residues 358–381 are disordered; the sequence is STDEPKPDAPPSDTETTSEAESKA. The span at 370–381 shows a compositional bias: polar residues; sequence DTETTSEAESKA.

The protein belongs to the G-protein coupled receptor 1 family. Opsin subfamily. Post-translationally, some or all of the Ser/Thr residues present in the C-terminal part may be phosphorylated.

It localises to the membrane. Functionally, visual pigments are the light-absorbing molecules that mediate vision. They consist of an apoprotein, opsin, covalently linked to cis-retinal. In Drosophila pseudoobscura pseudoobscura (Fruit fly), this protein is Opsin Rh2 (Rh2).